A 461-amino-acid chain; its full sequence is Bifunctional protein GlmU (461 aa).

The interval 1 to 243 (MNATVPSAAP…EDELRGINSR (243 aa)) is pyrophosphorylase. UDP-N-acetyl-alpha-D-glucosamine-binding positions include 24–27 (LAAG), lysine 38, glutamine 86, 91–92 (GT), 112–114 (YGD), glycine 155, glutamate 169, asparagine 184, and asparagine 241. Aspartate 114 is a binding site for Mg(2+). Position 241 (asparagine 241) interacts with Mg(2+). The interval 244–264 (AELAEAEACVQRRLRAAALDG) is linker. The interval 265–461 (GATLVAPETV…AALRRKKEQG (197 aa)) is N-acetyltransferase. UDP-N-acetyl-alpha-D-glucosamine is bound by residues arginine 330 and lysine 348. Histidine 360 (proton acceptor) is an active-site residue. Residues tyrosine 363 and asparagine 374 each coordinate UDP-N-acetyl-alpha-D-glucosamine. Acetyl-CoA contacts are provided by residues alanine 377, 383-384 (NY), serine 402, alanine 420, and arginine 437.

This sequence in the N-terminal section; belongs to the N-acetylglucosamine-1-phosphate uridyltransferase family. The protein in the C-terminal section; belongs to the transferase hexapeptide repeat family. In terms of assembly, homotrimer. Requires Mg(2+) as cofactor.

It localises to the cytoplasm. The enzyme catalyses alpha-D-glucosamine 1-phosphate + acetyl-CoA = N-acetyl-alpha-D-glucosamine 1-phosphate + CoA + H(+). The catalysed reaction is N-acetyl-alpha-D-glucosamine 1-phosphate + UTP + H(+) = UDP-N-acetyl-alpha-D-glucosamine + diphosphate. Its pathway is nucleotide-sugar biosynthesis; UDP-N-acetyl-alpha-D-glucosamine biosynthesis; N-acetyl-alpha-D-glucosamine 1-phosphate from alpha-D-glucosamine 6-phosphate (route II): step 2/2. It functions in the pathway nucleotide-sugar biosynthesis; UDP-N-acetyl-alpha-D-glucosamine biosynthesis; UDP-N-acetyl-alpha-D-glucosamine from N-acetyl-alpha-D-glucosamine 1-phosphate: step 1/1. It participates in bacterial outer membrane biogenesis; LPS lipid A biosynthesis. Functionally, catalyzes the last two sequential reactions in the de novo biosynthetic pathway for UDP-N-acetylglucosamine (UDP-GlcNAc). The C-terminal domain catalyzes the transfer of acetyl group from acetyl coenzyme A to glucosamine-1-phosphate (GlcN-1-P) to produce N-acetylglucosamine-1-phosphate (GlcNAc-1-P), which is converted into UDP-GlcNAc by the transfer of uridine 5-monophosphate (from uridine 5-triphosphate), a reaction catalyzed by the N-terminal domain. In Gluconacetobacter diazotrophicus (strain ATCC 49037 / DSM 5601 / CCUG 37298 / CIP 103539 / LMG 7603 / PAl5), this protein is Bifunctional protein GlmU.